The chain runs to 338 residues: 6-phosphogluconolactonase (338 aa).

The protein belongs to the cycloisomerase 2 family.

It catalyses the reaction 6-phospho-D-glucono-1,5-lactone + H2O = 6-phospho-D-gluconate + H(+). It participates in carbohydrate degradation; pentose phosphate pathway; D-ribulose 5-phosphate from D-glucose 6-phosphate (oxidative stage): step 2/3. Functionally, catalyzes the hydrolysis of 6-phosphogluconolactone to 6-phosphogluconate. In Blochmanniella floridana, this protein is 6-phosphogluconolactonase.